A 264-amino-acid polypeptide reads, in one-letter code: Leukocyte receptor cluster member 1 (264 aa).

Disordered stretches follow at residues 1–37 and 49–76; these read MNIL…RERR and FLRK…SGPV. The segment covering 12–37 has biased composition (basic and acidic residues); sequence RNKDNVARVRRDEAQAREEEKERERR. A coiled-coil region spans residues 16 to 46; the sequence is NVARVRRDEAQAREEEKERERRVLLAQQEAR. S59 carries the phosphoserine modification. The segment covering 59–75 has biased composition (low complexity); it reads SLPELEAAEAGAPGSGP. Positions 89 to 115 form a coiled coil; it reads VIRGNKEYKEEKRQEKERQEKALGILT. Residues 118 to 264 are disordered; sequence GQSAAEAQTQ…PRQQDPHLTH (147 aa). Composition is skewed to basic and acidic residues over residues 146–162 and 170–214; these read PDEK…EMQK and HGGD…RSRA. Residues 196 to 222 are a coiled coil; it reads LDQLRAERLRREAAERSRAEALLARVQ. At S245 the chain carries Phosphoserine.

The polypeptide is Leukocyte receptor cluster member 1 (LENG1) (Homo sapiens (Human)).